We begin with the raw amino-acid sequence, 274 residues long: MGTLSVNQNKLQKRLRRLAGEAVADFNMIEEGDKVMVCLSGGKDSYTLLDVLMHFQKVAPIRFDIVAVNMDQKQPGFPEHVLPAYLKELGVEYHIVEKDTHSVVKELIPEGKTTCSLCSRLRRGTLYTFADQIGATKMALGHHRDDIIETFFLNMFFNGALKAMPPKLRADDGRNVVIRPLAYCHEKDIQAYSDLKQFPIIPCNLCGSQENLQRQVVKDMLLDWERKTPGRTESIFRALQNVQPSQLADRKLFDFSQLRIDETAASRFVNVVNI.

The PP-loop motif motif lies at 40–45 (SGGKDS). [4Fe-4S] cluster contacts are provided by C115, C118, and C206.

The protein belongs to the TtcA family. Homodimer. The cofactor is Mg(2+). [4Fe-4S] cluster serves as cofactor.

The protein localises to the cytoplasm. It carries out the reaction cytidine(32) in tRNA + S-sulfanyl-L-cysteinyl-[cysteine desulfurase] + AH2 + ATP = 2-thiocytidine(32) in tRNA + L-cysteinyl-[cysteine desulfurase] + A + AMP + diphosphate + H(+). It participates in tRNA modification. Functionally, catalyzes the ATP-dependent 2-thiolation of cytidine in position 32 of tRNA, to form 2-thiocytidine (s(2)C32). The sulfur atoms are provided by the cysteine/cysteine desulfurase (IscS) system. This is tRNA-cytidine(32) 2-sulfurtransferase from Pseudomonas syringae pv. tomato (strain ATCC BAA-871 / DC3000).